A 281-amino-acid chain; its full sequence is Phosphatidylserine decarboxylase proenzyme (281 aa).

Residues Asp-90, His-143, and Ser-248 each act as charge relay system; for autoendoproteolytic cleavage activity in the active site. Ser-248 functions as the Schiff-base intermediate with substrate; via pyruvic acid; for decarboxylase activity in the catalytic mechanism. At Ser-248 the chain carries Pyruvic acid (Ser); by autocatalysis.

It belongs to the phosphatidylserine decarboxylase family. PSD-B subfamily. Prokaryotic type I sub-subfamily. Heterodimer of a large membrane-associated beta subunit and a small pyruvoyl-containing alpha subunit. Pyruvate is required as a cofactor. In terms of processing, is synthesized initially as an inactive proenzyme. Formation of the active enzyme involves a self-maturation process in which the active site pyruvoyl group is generated from an internal serine residue via an autocatalytic post-translational modification. Two non-identical subunits are generated from the proenzyme in this reaction, and the pyruvate is formed at the N-terminus of the alpha chain, which is derived from the carboxyl end of the proenzyme. The autoendoproteolytic cleavage occurs by a canonical serine protease mechanism, in which the side chain hydroxyl group of the serine supplies its oxygen atom to form the C-terminus of the beta chain, while the remainder of the serine residue undergoes an oxidative deamination to produce ammonia and the pyruvoyl prosthetic group on the alpha chain. During this reaction, the Ser that is part of the protease active site of the proenzyme becomes the pyruvoyl prosthetic group, which constitutes an essential element of the active site of the mature decarboxylase.

It localises to the cell membrane. The enzyme catalyses a 1,2-diacyl-sn-glycero-3-phospho-L-serine + H(+) = a 1,2-diacyl-sn-glycero-3-phosphoethanolamine + CO2. Its pathway is phospholipid metabolism; phosphatidylethanolamine biosynthesis; phosphatidylethanolamine from CDP-diacylglycerol: step 2/2. Catalyzes the formation of phosphatidylethanolamine (PtdEtn) from phosphatidylserine (PtdSer). The sequence is that of Phosphatidylserine decarboxylase proenzyme from Francisella philomiragia subsp. philomiragia (strain ATCC 25017 / CCUG 19701 / FSC 153 / O#319-036).